The chain runs to 603 residues: Geraniol synthase Tps-5073G30, chloroplastic (603 aa).

Residues 1 to 35 (MCSISQKVVIGLNKAAANNNLQNLDRRGFKTRCVS) constitute a chloroplast transit peptide. Positions 319, 356, 360, 497, and 500 each coordinate (2E)-geranyl diphosphate. Mg(2+)-binding residues include aspartate 356 and aspartate 360. Positions 356–360 (DDVYD) match the DDXXD motif motif. Mg(2+) is bound by residues aspartate 500, threonine 504, and glutamate 508.

Belongs to the terpene synthase family. Tpsb subfamily. Monomer. Requires Mg(2+) as cofactor. The cofactor is Mn(2+).

It is found in the plastid. The protein resides in the chloroplast. The enzyme catalyses (2E)-geranyl diphosphate + H2O = (2E)-geraniol + diphosphate. The protein operates within secondary metabolite biosynthesis; terpenoid biosynthesis. Functionally, monoterpene synthase (mono-TPS) involved in the biosynthesis of monoterpenes natural products. Catalyzes the conversion of (2E)-geranyl diphosphate (GPP) into geraniol. This is Geraniol synthase Tps-5073G30, chloroplastic from Perilla frutescens (Beefsteak mint).